The sequence spans 461 residues: MRVLIKNGIVVNADGQAKQDLLIESGIVRQLGTDISPQLPCEEIDASGCYVFPGGVDVHTHFNIDVGIARSCDDFFTGTRAAACGGTTTIIDHMGFGPNGCRLRHQLEVYRGYAAHKAVIDYSFHGVIQHINHAILDEIPMMVEEGLSSFKLYLTYQYKLNDDEVLQALRRLHESGALTTVHPENDAAIASKRAEFIAAGLTAPRYHALSRPLECEAEAIARMINLAQIAGNAPLYIVHLSNGLGLDYLRLARANHQPVWVETCPQYLLLDERSYDTEDGMKFILSPPLRNVREQDKLWCGISDGAIDVVATDHCTFSMAQRLQISKGDFSRCPNGLPGVENRMQLLFSSGVMTGRISPERFVELTSAMPARLFGLWPQKGLLAPGSDGDVVIIDPRQSQQIQHRHLHDNADYSPWEGFTCQGAIVRTLSRGETIFCDGTFTGKAGRGRFLRRKPFVPPVL.

Histidine 59, histidine 61, and lysine 151 together coordinate a divalent metal cation. Lysine 151 is subject to N6-carboxylysine. Position 156 (tyrosine 156) interacts with substrate. A divalent metal cation-binding residues include histidine 182 and histidine 239. Serine 286 lines the substrate pocket. An a divalent metal cation-binding site is contributed by aspartate 313. Asparagine 335 contributes to the substrate binding site.

The protein belongs to the metallo-dependent hydrolases superfamily. Hydantoinase/dihydropyrimidinase family. Homotetramer. Requires a divalent metal cation as cofactor. Post-translationally, carboxylation allows a single lysine to coordinate two divalent metal cations.

The catalysed reaction is D-5-phenylhydantoin + H2O = N-carbamoyl-D-phenylglycine + H(+). Functionally, catalyzes the stereospecific hydrolysis of the cyclic amide bond of D-hydantoin derivatives with an aromatic side chains at the 5'-position. Has no activity on dihydropyrimidines. The physiological function is unknown. This Escherichia coli O6:K15:H31 (strain 536 / UPEC) protein is D-phenylhydantoinase.